Here is a 464-residue protein sequence, read N- to C-terminus: DNA primase DnaG (464 aa).

A Toprim domain is found at D171–K245. The Mg(2+) site is built by E177, D219, and D221.

The protein belongs to the archaeal DnaG primase family. In terms of assembly, forms a ternary complex with MCM helicase and DNA. Mg(2+) is required as a cofactor.

It carries out the reaction ssDNA + n NTP = ssDNA/pppN(pN)n-1 hybrid + (n-1) diphosphate.. In terms of biological role, RNA polymerase that catalyzes the synthesis of short RNA molecules used as primers for DNA polymerase during DNA replication. The sequence is that of DNA primase DnaG from Methanococcus aeolicus (strain ATCC BAA-1280 / DSM 17508 / OCM 812 / Nankai-3).